The sequence spans 288 residues: Pantothenate synthetase (288 aa).

30–37 (MGNLHNGH) serves as a coordination point for ATP. Catalysis depends on histidine 37, which acts as the Proton donor. Glutamine 61 is a binding site for (R)-pantoate. Glutamine 61 contributes to the beta-alanine binding site. 149–152 (GQKD) serves as a coordination point for ATP. Glutamine 155 contributes to the (R)-pantoate binding site. ATP is bound by residues valine 178 and 186–189 (LSSR).

This sequence belongs to the pantothenate synthetase family. In terms of assembly, homodimer.

Its subcellular location is the cytoplasm. The enzyme catalyses (R)-pantoate + beta-alanine + ATP = (R)-pantothenate + AMP + diphosphate + H(+). Its pathway is cofactor biosynthesis; (R)-pantothenate biosynthesis; (R)-pantothenate from (R)-pantoate and beta-alanine: step 1/1. Its function is as follows. Catalyzes the condensation of pantoate with beta-alanine in an ATP-dependent reaction via a pantoyl-adenylate intermediate. This chain is Pantothenate synthetase, found in Tolumonas auensis (strain DSM 9187 / NBRC 110442 / TA 4).